A 70-amino-acid polypeptide reads, in one-letter code: ATP synthase subunit c (70 aa).

2 consecutive transmembrane segments (helical) span residues 4 to 24 (IASA…NGLI) and 47 to 67 (FVGV…AFMV).

This sequence belongs to the ATPase C chain family. F-type ATPases have 2 components, F(1) - the catalytic core - and F(0) - the membrane proton channel. F(1) has five subunits: alpha(3), beta(3), gamma(1), delta(1), epsilon(1). F(0) has three main subunits: a(1), b(2) and c(10-14). The alpha and beta chains form an alternating ring which encloses part of the gamma chain. F(1) is attached to F(0) by a central stalk formed by the gamma and epsilon chains, while a peripheral stalk is formed by the delta and b chains.

Its subcellular location is the cell membrane. Its function is as follows. F(1)F(0) ATP synthase produces ATP from ADP in the presence of a proton or sodium gradient. F-type ATPases consist of two structural domains, F(1) containing the extramembraneous catalytic core and F(0) containing the membrane proton channel, linked together by a central stalk and a peripheral stalk. During catalysis, ATP synthesis in the catalytic domain of F(1) is coupled via a rotary mechanism of the central stalk subunits to proton translocation. In terms of biological role, key component of the F(0) channel; it plays a direct role in translocation across the membrane. A homomeric c-ring of between 10-14 subunits forms the central stalk rotor element with the F(1) delta and epsilon subunits. This is ATP synthase subunit c from Priestia megaterium (strain ATCC 12872 / QMB1551) (Bacillus megaterium).